The chain runs to 116 residues: Protein Wnt-5b (116 aa).

Ser1 carries O-palmitoleoyl serine; by PORCN lipidation. Residues Asn69 and Asn83 are each glycosylated (N-linked (GlcNAc...) asparagine). Cysteines 82 and 97 form a disulfide.

This sequence belongs to the Wnt family. In terms of processing, palmitoleoylation is required for efficient binding to frizzled receptors. Depalmitoleoylation leads to Wnt signaling pathway inhibition.

Its subcellular location is the secreted. It localises to the extracellular space. The protein localises to the extracellular matrix. Functionally, ligand for members of the frizzled family of seven transmembrane receptors. Probable developmental protein. May be a signaling molecule which affects the development of discrete regions of tissues. Is likely to signal over only few cell diameters. The sequence is that of Protein Wnt-5b (WNT-5B) from Plethodon jordani (Red-cheeked salamander).